The chain runs to 349 residues: Histidinol-phosphate aminotransferase (349 aa).

The segment at 1-22 (MVSIRPSVRHTPAYVPGEQPQT) is disordered. Position 207 is an N6-(pyridoxal phosphate)lysine (lysine 207).

Belongs to the class-II pyridoxal-phosphate-dependent aminotransferase family. Histidinol-phosphate aminotransferase subfamily. As to quaternary structure, homodimer. It depends on pyridoxal 5'-phosphate as a cofactor.

The catalysed reaction is L-histidinol phosphate + 2-oxoglutarate = 3-(imidazol-4-yl)-2-oxopropyl phosphate + L-glutamate. Its pathway is amino-acid biosynthesis; L-histidine biosynthesis; L-histidine from 5-phospho-alpha-D-ribose 1-diphosphate: step 7/9. The polypeptide is Histidinol-phosphate aminotransferase (hisC) (Synechocystis sp. (strain ATCC 27184 / PCC 6803 / Kazusa)).